A 529-amino-acid chain; its full sequence is E3 ubiquitin-protein ligase arih1 (529 aa).

Disordered regions lie at residues 1–30 (MDSD…EDDL) and 49–68 (GICG…GEEE). Gly residues predominate over residues 51–64 (CGEGGGSALGPGPG). Residues 77–125 (TAEQILQHMVECIREVNEVIQNPATITRILLSHFNWDKEKLMERYFDGN) form a UBA-like region. The tract at residues 154–365 (QDMPCQICYL…SAWYNCNRYN (212 aa)) is TRIAD supradomain. The Zn(2+) site is built by Cys158, Cys161, Cys175, His177, Cys180, Cys183, Cys203, Cys208, Cys248, Cys253, Cys269, Cys271, Cys276, Cys279, His284, Cys289, Cys316, and Cys319. The RING-type 1 zinc-finger motif lies at 158–208 (CQICYLNYPNSYFTGLECGHKFCMQCWSEYLTTKIIEEGMGQTISCPAHGC). An IBR-type zinc finger spans residues 228–289 (LKYQHLITNS…GENWHDPVKC (62 aa)). Residues 316 to 347 (CPKCHVTIEKDGGCNHMVCRNQNCKAEFCWVC) form an RING-type 2; atypical zinc finger. Cys329 is a catalytic residue. Zn(2+) contacts are provided by Cys334, Cys339, Cys344, Cys347, His354, and Cys361. An ariadne domain region spans residues 380–529 (RAALQRYLFY…EKDLWEYIED (150 aa)).

Belongs to the RBR family. Ariadne subfamily. As to quaternary structure, interacts (via the first RING-type zinc finger) with ube2l3. Associates with cullin-RING ubiquitin ligase (CRL) complexes containing neddylated cullin.

The protein localises to the cytoplasm. Its subcellular location is the nucleus. The enzyme catalyses [E2 ubiquitin-conjugating enzyme]-S-ubiquitinyl-L-cysteine + [acceptor protein]-L-lysine = [E2 ubiquitin-conjugating enzyme]-L-cysteine + [acceptor protein]-N(6)-ubiquitinyl-L-lysine.. It participates in protein modification; protein ubiquitination. With respect to regulation, autoinhibited by the ariadne domain, which masks the second RING-type zinc finger that contains the active site and inhibits the E3 activity. Inhibition is relieved upon binding to neddylated cullin-RING ubiquitin ligase complexes, which activate the E3 ligase activity of ARIH1. Functionally, E3 ubiquitin-protein ligase, which catalyzes ubiquitination of target proteins together with ubiquitin-conjugating enzyme E2 ube2l3. Acts as an atypical E3 ubiquitin-protein ligase by working together with cullin-RING ubiquitin ligase (CRL) complexes and initiating ubiquitination of CRL substrates: associates with CRL complexes and specifically mediates addition of the first ubiquitin on CRLs targets. The initial ubiquitin is then elongated. E3 ubiquitin-protein ligase activity is activated upon binding to neddylated cullin-RING ubiquitin ligase complexes. The sequence is that of E3 ubiquitin-protein ligase arih1 (arih1) from Xenopus tropicalis (Western clawed frog).